We begin with the raw amino-acid sequence, 405 residues long: Putative colanic acid polymerase (405 aa).

11 helical membrane-spanning segments follow: residues 5 to 25 (IRIC…VKIA), 27 to 47 (LGES…LLFL), 55 to 75 (LMIA…FGQS), 81 to 101 (YVTS…VWSI), 117 to 137 (FFYL…AQII), 171 to 191 (TALY…WLSI), 204 to 224 (MILA…FILF), 244 to 264 (PLAL…FPYI), 282 to 302 (IVGP…VVRF), 327 to 347 (GLYL…LWYM), and 376 to 396 (LFFT…CPFI).

It localises to the cell inner membrane. Its pathway is slime biogenesis; slime polysaccharide biosynthesis. This chain is Putative colanic acid polymerase (wcaD), found in Escherichia coli (strain K12).